Here is a 94-residue protein sequence, read N- to C-terminus: uncharacterized protein (94 aa).

This is an uncharacterized protein from Escherichia coli (strain K12).